A 444-amino-acid polypeptide reads, in one-letter code: 23S rRNA (uracil(1939)-C(5))-methyltransferase RlmD (444 aa).

The TRAM domain occupies 5–67; the sequence is RSRIDRTPFQ…RHFDEARTVE (63 aa). [4Fe-4S] cluster-binding residues include Cys-80, Cys-86, Cys-89, and Cys-168. S-adenosyl-L-methionine-binding residues include Gln-276, Phe-305, Asn-310, Glu-326, Asp-353, and Asp-374. Cys-400 (nucleophile) is an active-site residue.

This sequence belongs to the class I-like SAM-binding methyltransferase superfamily. RNA M5U methyltransferase family. RlmD subfamily.

It carries out the reaction uridine(1939) in 23S rRNA + S-adenosyl-L-methionine = 5-methyluridine(1939) in 23S rRNA + S-adenosyl-L-homocysteine + H(+). Its function is as follows. Catalyzes the formation of 5-methyl-uridine at position 1939 (m5U1939) in 23S rRNA. The chain is 23S rRNA (uracil(1939)-C(5))-methyltransferase RlmD from Stenotrophomonas maltophilia (strain R551-3).